The sequence spans 332 residues: Putative symporter YfeH (332 aa).

Belongs to the bile acid:sodium symporter (BASS) (TC 2.A.28) family.

The protein is Putative symporter YfeH (yfeH) of Escherichia coli (strain K12).